The following is a 540-amino-acid chain: MAKDPGRVLIFDTTLRDGEQSPGASLNLEEKLAIAQQLARLGVDVIEAGFPFASPGDFAAVQRIAQQVGGDNGPIICGLARASRADIKACADAVAPAPRRRIHTFIATSDIHLEHKLRKSRGDVLGIVPEMVSYARSLVEDVEFSCEDAGRSDPEFLYEVIEAAIAAGATTINIPDTVGYTTPSEFGALIAGINQHVPNIGEAVISVHGHNDLGLAVANFLEAVKNGARQLECTINGIGERAGNASLEELVMALHVRRRYYNPFFGREEDSPTPLTAVRTEEITKTSRLVSNLTGMVVQPNKAIVGANAFAHESGIHQDGVLKNRLTYEIIDAQTVGLSDNRISLGKLSGRSAVRARLEELGYDLTREDLDEAFARFKELADRKREITDRDLEAIVSEQVQQPEARFQLKLVQVSCGSSLRPTATVTLLDEEGSETTGSAVGTGPVDAVCRALNDLAGVPNELIEFSVKSVTEGIDAMGDVTIRLRRNGALYSGHAADTDVVVAAGMAFVNALNRLVAGEERQSLHPQKDPVVLESRPTL.

Residues 8–271 (VLIFDTTLRD…NPFFGREEDS (264 aa)) form the Pyruvate carboxyltransferase domain. Mn(2+) is bound by residues aspartate 17, histidine 208, histidine 210, and asparagine 244. The regulatory domain stretch occupies residues 408–540 (QLKLVQVSCG…PVVLESRPTL (133 aa)).

The protein belongs to the alpha-IPM synthase/homocitrate synthase family. LeuA type 1 subfamily. In terms of assembly, homodimer. It depends on Mn(2+) as a cofactor.

It localises to the cytoplasm. The enzyme catalyses 3-methyl-2-oxobutanoate + acetyl-CoA + H2O = (2S)-2-isopropylmalate + CoA + H(+). It functions in the pathway amino-acid biosynthesis; L-leucine biosynthesis; L-leucine from 3-methyl-2-oxobutanoate: step 1/4. Functionally, catalyzes the condensation of the acetyl group of acetyl-CoA with 3-methyl-2-oxobutanoate (2-ketoisovalerate) to form 3-carboxy-3-hydroxy-4-methylpentanoate (2-isopropylmalate). In Synechococcus sp. (strain CC9605), this protein is 2-isopropylmalate synthase.